A 101-amino-acid polypeptide reads, in one-letter code: Albumin (101 aa).

2 consecutive Albumin domains span residues 1 to 80 (DAEH…AFXY) and 81 to 101 (ESGA…PDVL). Histidine 4 lines the Cu cation pocket.

This sequence belongs to the ALB/AFP/VDB family. In terms of tissue distribution, plasma.

Its subcellular location is the secreted. Its function is as follows. Binds water, Ca(2+), Na(+), K(+), fatty acids, hormones, bilirubin and drugs. Its main function is the regulation of the colloidal osmotic pressure of blood. The sequence is that of Albumin (alb) from Neoceratodus forsteri (Australian lungfish).